Here is a 319-residue protein sequence, read N- to C-terminus: tRNA U34 carboxymethyltransferase (319 aa).

Residues K88, W102, K107, G126, 176-177 (LE), M192, Y196, and R311 contribute to the carboxy-S-adenosyl-L-methionine site.

This sequence belongs to the class I-like SAM-binding methyltransferase superfamily. CmoB family. In terms of assembly, homotetramer.

It carries out the reaction carboxy-S-adenosyl-L-methionine + 5-hydroxyuridine(34) in tRNA = 5-carboxymethoxyuridine(34) in tRNA + S-adenosyl-L-homocysteine + H(+). Functionally, catalyzes carboxymethyl transfer from carboxy-S-adenosyl-L-methionine (Cx-SAM) to 5-hydroxyuridine (ho5U) to form 5-carboxymethoxyuridine (cmo5U) at position 34 in tRNAs. This chain is tRNA U34 carboxymethyltransferase, found in Pseudomonas savastanoi pv. phaseolicola (strain 1448A / Race 6) (Pseudomonas syringae pv. phaseolicola (strain 1448A / Race 6)).